The following is a 196-amino-acid chain: Mpv17-like protein (196 aa).

Residues 1–16 lie on the Cytoplasmic side of the membrane; sequence MAGWWPALSRAARRHP. The tract at residues 16-55 is targeting to peroxisomes; the sequence is PWPTNVLLYGSLVSAGDALQQRLQGREANWRQTRRVATLV. Residues 17–34 form a helical membrane-spanning segment; it reads WPTNVLLYGSLVSAGDAL. The Lumenal segment spans residues 35–50; the sequence is QQRLQGREANWRQTRR. The chain crosses the membrane as a helical span at residues 51-67; that stretch reads VATLVVTFHANFNYVWL. Over 68-90 the chain is Cytoplasmic; that stretch reads RLLERALPGRAPHALLAKLLCDQ. The chain crosses the membrane as a helical span at residues 91 to 108; it reads VVGAPIAVSAFYVGMSIL. The Lumenal portion of the chain corresponds to 109 to 150; that stretch reads QGKDDIFLDLKQKFWNTYLSGLMYWPFVQLTNFSLVPVQWRT. The chain crosses the membrane as a helical span at residues 151 to 167; the sequence is AYAGVCGFLWATFICFS. Over 168-196 the chain is Cytoplasmic; it reads QQSGDGTFKSAFTILYTKGTSATEGYPKK.

This sequence belongs to the peroxisomal membrane protein PXMP2/4 family. As to expression, isoform 1 is detected in the kidney (at protein level). Isoform 1 and isoform 2 are expressed in the kidney, heart, liver, lung, pancreas and skeletal muscle.

It localises to the peroxisome membrane. Participates in reactive oxygen species metabolism by up- or down-regulation of the genes of antioxidant enzymes. Protective against the mitochondrial apoptotic cascade. The polypeptide is Mpv17-like protein (MPV17L) (Homo sapiens (Human)).